A 450-amino-acid polypeptide reads, in one-letter code: Histidinol dehydrogenase (450 aa).

Residues Y135, Q197, and N225 each coordinate NAD(+). 3 residues coordinate substrate: T248, Q270, and H273. Residues Q270 and H273 each contribute to the Zn(2+) site. Active-site proton acceptor residues include E339 and H340. H340, D373, E427, and H432 together coordinate substrate. Residue D373 participates in Zn(2+) binding. H432 contacts Zn(2+).

This sequence belongs to the histidinol dehydrogenase family. Requires Zn(2+) as cofactor.

The catalysed reaction is L-histidinol + 2 NAD(+) + H2O = L-histidine + 2 NADH + 3 H(+). It functions in the pathway amino-acid biosynthesis; L-histidine biosynthesis; L-histidine from 5-phospho-alpha-D-ribose 1-diphosphate: step 9/9. In terms of biological role, catalyzes the sequential NAD-dependent oxidations of L-histidinol to L-histidinaldehyde and then to L-histidine. The sequence is that of Histidinol dehydrogenase from Corynebacterium jeikeium (strain K411).